The chain runs to 460 residues: Cysteine--tRNA ligase (460 aa).

A Zn(2+)-binding site is contributed by cysteine 27. A 'HIGH' region motif is present at residues 29–39 (PTVYDLIHVGN). Zn(2+) contacts are provided by cysteine 207, histidine 232, and glutamate 236. Residues 264-268 (KMSKS) carry the 'KMSKS' region motif. Lysine 267 is a binding site for ATP.

It belongs to the class-I aminoacyl-tRNA synthetase family. In terms of assembly, monomer. Requires Zn(2+) as cofactor.

The protein resides in the cytoplasm. It carries out the reaction tRNA(Cys) + L-cysteine + ATP = L-cysteinyl-tRNA(Cys) + AMP + diphosphate. This is Cysteine--tRNA ligase (cysS) from Thermotoga maritima (strain ATCC 43589 / DSM 3109 / JCM 10099 / NBRC 100826 / MSB8).